Here is a 429-residue protein sequence, read N- to C-terminus: UDP-N-acetylglucosamine 1-carboxyvinyltransferase (429 aa).

22-23 (KN) contributes to the phosphoenolpyruvate binding site. Position 102 (R102) interacts with UDP-N-acetyl-alpha-D-glucosamine. C126 acts as the Proton donor in catalysis. The residue at position 126 (C126) is a 2-(S-cysteinyl)pyruvic acid O-phosphothioketal. UDP-N-acetyl-alpha-D-glucosamine-binding positions include 131–135 (RPVDL), D316, and I338.

This sequence belongs to the EPSP synthase family. MurA subfamily.

It localises to the cytoplasm. The catalysed reaction is phosphoenolpyruvate + UDP-N-acetyl-alpha-D-glucosamine = UDP-N-acetyl-3-O-(1-carboxyvinyl)-alpha-D-glucosamine + phosphate. It functions in the pathway cell wall biogenesis; peptidoglycan biosynthesis. Its function is as follows. Cell wall formation. Adds enolpyruvyl to UDP-N-acetylglucosamine. This chain is UDP-N-acetylglucosamine 1-carboxyvinyltransferase, found in Methylobacterium sp. (strain 4-46).